Consider the following 388-residue polypeptide: tRNA(Ile)-lysidine synthase (388 aa).

Residue 51–56 coordinates ATP; it reads SGGRDS.

The protein belongs to the tRNA(Ile)-lysidine synthase family.

It is found in the cytoplasm. It catalyses the reaction cytidine(34) in tRNA(Ile2) + L-lysine + ATP = lysidine(34) in tRNA(Ile2) + AMP + diphosphate + H(+). Ligates lysine onto the cytidine present at position 34 of the AUA codon-specific tRNA(Ile) that contains the anticodon CAU, in an ATP-dependent manner. Cytidine is converted to lysidine, thus changing the amino acid specificity of the tRNA from methionine to isoleucine. This is tRNA(Ile)-lysidine synthase from Bifidobacterium longum (strain DJO10A).